A 197-amino-acid polypeptide reads, in one-letter code: uncharacterized protein (197 aa).

It belongs to the NAD(P)H dehydrogenase (quinone) family.

This is an uncharacterized protein from Bacillus subtilis (strain 168).